The sequence spans 450 residues: Tubulin alpha-6 chain (450 aa).

Positions 11, 71, 144, 145, 179, 206, and 228 each coordinate GTP. E71 is a Mg(2+) binding site. E254 is a catalytic residue.

This sequence belongs to the tubulin family. As to quaternary structure, dimer of alpha and beta chains. A typical microtubule is a hollow water-filled tube with an outer diameter of 25 nm and an inner diameter of 15 nM. Alpha-beta heterodimers associate head-to-tail to form protofilaments running lengthwise along the microtubule wall with the beta-tubulin subunit facing the microtubule plus end conferring a structural polarity. Microtubules usually have 13 protofilaments but different protofilament numbers can be found in some organisms and specialized cells. Mg(2+) is required as a cofactor. In terms of processing, undergoes a tyrosination/detyrosination cycle, the cyclic removal and re-addition of a C-terminal tyrosine residue by the enzymes tubulin tyrosine carboxypeptidase (TTCP) and tubulin tyrosine ligase (TTL), respectively.

Its subcellular location is the cytoplasm. It is found in the cytoskeleton. The enzyme catalyses GTP + H2O = GDP + phosphate + H(+). Tubulin is the major constituent of microtubules, a cylinder consisting of laterally associated linear protofilaments composed of alpha- and beta-tubulin heterodimers. Microtubules grow by the addition of GTP-tubulin dimers to the microtubule end, where a stabilizing cap forms. Below the cap, tubulin dimers are in GDP-bound state, owing to GTPase activity of alpha-tubulin. The chain is Tubulin alpha-6 chain (TUBA6) from Zea mays (Maize).